The sequence spans 277 residues: Large ribosomal subunit protein uL2 (277 aa).

The disordered stretch occupies residues 223 to 277 (VAMNPVDHPHGGGEGRTSTGRHPVTPWGKRTLGKKTRKRKASDKYIIRSRRARKR). A compositionally biased stretch (basic residues) spans 253–277 (TLGKKTRKRKASDKYIIRSRRARKR).

The protein belongs to the universal ribosomal protein uL2 family. Part of the 50S ribosomal subunit. Forms a bridge to the 30S subunit in the 70S ribosome.

Its function is as follows. One of the primary rRNA binding proteins. Required for association of the 30S and 50S subunits to form the 70S ribosome, for tRNA binding and peptide bond formation. It has been suggested to have peptidyltransferase activity; this is somewhat controversial. Makes several contacts with the 16S rRNA in the 70S ribosome. In Halothermothrix orenii (strain H 168 / OCM 544 / DSM 9562), this protein is Large ribosomal subunit protein uL2.